We begin with the raw amino-acid sequence, 608 residues long: Epsin-3 (608 aa).

A 1,2-diacyl-sn-glycero-3-phospho-(1D-myo-inositol-4,5-bisphosphate)-binding residues include arginine 8, lysine 11, arginine 25, asparagine 30, arginine 63, and histidine 73. The region spanning 12-144 is the ENTH domain; that stretch reads NIVHNYSEAE…KDEERLRQER (133 aa). Disordered regions lie at residues 150-266 and 281-475; these read TKER…QSSI and STHC…GPSA. Residues 174 to 189 are compositionally biased toward low complexity; the sequence is GSPSSYTSASSSPRYA. Phosphoserine occurs at positions 184 and 185. The region spanning 202 to 221 is the UIM domain; sequence EEELQLQLALAMSREEAEKG. 2 stretches are compositionally biased toward basic and acidic residues: residues 214-229 and 240-260; these read SREEAEKGGRSWKGDD and GQRRRDREPEREERKEEEKLK. Repeat copies occupy residues 287–289, 310–312, 337–339, 353–355, 370–372, 495–497, and 508–510. Residues 287 to 372 form a 5 X 3 AA repeats of [DE]-P-W region; the sequence is DPWDIPGLRP…KLPSTGVDPW (86 aa). The span at 346–363 shows a compositional bias: pro residues; that stretch reads PSGPPITDPWAPSSPTPK. The interval 495–607 is 3 X 3 AA repeats of N-P-F; that stretch reads NPFLTGLSAP…LPPQAGTNPF (113 aa). 2 disordered regions span residues 498–530 and 575–608; these read LTGLSAPSPTNPFGAGEQGRPTLNQMRTGSPAL and GAFAPPPASLPQPLLPTSDPVGPLPPQAGTNPFL. Pro residues predominate over residues 578 to 588; the sequence is APPPASLPQPL. Repeat unit 3 spans residues 605–607; it reads NPF.

The protein belongs to the epsin family.

Its subcellular location is the cytoplasm. It is found in the cell cortex. The protein localises to the perinuclear region. The protein resides in the cytoplasmic vesicle. It localises to the clathrin-coated vesicle. Its subcellular location is the nucleus. In Rattus norvegicus (Rat), this protein is Epsin-3 (Epn3).